Here is a 155-residue protein sequence, read N- to C-terminus: Putative pre-16S rRNA nuclease (155 aa).

The protein belongs to the YqgF nuclease family.

The protein resides in the cytoplasm. Functionally, could be a nuclease involved in processing of the 5'-end of pre-16S rRNA. The chain is Putative pre-16S rRNA nuclease from Xanthomonas euvesicatoria pv. vesicatoria (strain 85-10) (Xanthomonas campestris pv. vesicatoria).